The chain runs to 528 residues: Peptide chain release factor 3 (528 aa).

Positions 9 to 280 (RRRRTFAIIS…LKLAPAPAPR (272 aa)) constitute a tr-type G domain. GTP contacts are provided by residues 18 to 25 (SHPDAGKT), 86 to 90 (DTPGH), and 140 to 143 (NKLD).

It belongs to the TRAFAC class translation factor GTPase superfamily. Classic translation factor GTPase family. PrfC subfamily.

The protein resides in the cytoplasm. Functionally, increases the formation of ribosomal termination complexes and stimulates activities of RF-1 and RF-2. It binds guanine nucleotides and has strong preference for UGA stop codons. It may interact directly with the ribosome. The stimulation of RF-1 and RF-2 is significantly reduced by GTP and GDP, but not by GMP. This Symbiobacterium thermophilum (strain DSM 24528 / JCM 14929 / IAM 14863 / T) protein is Peptide chain release factor 3.